The chain runs to 358 residues: 3-dehydroquinate synthase (358 aa).

Residues 105-109 (GVVGD), 129-130 (TT), K142, K151, and 169-172 (TLKT) each bind NAD(+). E184, H245, and H262 together coordinate Zn(2+).

Belongs to the sugar phosphate cyclases superfamily. Dehydroquinate synthase family. NAD(+) is required as a cofactor. Co(2+) serves as cofactor. It depends on Zn(2+) as a cofactor.

The protein localises to the cytoplasm. The enzyme catalyses 7-phospho-2-dehydro-3-deoxy-D-arabino-heptonate = 3-dehydroquinate + phosphate. It participates in metabolic intermediate biosynthesis; chorismate biosynthesis; chorismate from D-erythrose 4-phosphate and phosphoenolpyruvate: step 2/7. Catalyzes the conversion of 3-deoxy-D-arabino-heptulosonate 7-phosphate (DAHP) to dehydroquinate (DHQ). The sequence is that of 3-dehydroquinate synthase from Enterococcus faecalis (strain ATCC 47077 / OG1RF).